The sequence spans 1649 residues: PHD and RING finger domain-containing protein 1 (1649 aa).

A disordered region spans residues 1-79 (MDDDSLDELV…RSGSEDSEDD (79 aa)). Ser-5 carries the post-translational modification Phosphoserine. Over residues 54-79 (TDGEDEGASEEEDLEDRSGSEDSEDD) the composition is skewed to acidic residues. Residues 108 to 149 (CPICLNAFRDQAVGTPENCAHYFCLDCIVEWSKNANSCPVDR) form an RING-type; degenerate zinc finger. The PHD-type zinc finger occupies 183–233 (PTFCEVCGRSDREDRLLLCDGCDAGYHMECLDPPLQEVPVDEWFCPECAAP). The disordered stretch occupies residues 324-398 (VYQRPLTPRT…TRSRIARTLG (75 aa)). Thr-330 bears the Phosphothreonine mark. Residues 334 to 353 (PARRKRKTRRRKKVPGRKKT) are compositionally biased toward basic residues. The segment covering 354-366 (PSGPSAKSKSSAT) has biased composition (low complexity). Basic residues predominate over residues 367–382 (RSKKRQHRVKKRRGKK). Ser-445 and Ser-455 each carry phosphoserine. 4 disordered regions span residues 534–600 (KRAA…GAPV), 644–871 (SAAS…PKAQ), 888–1240 (FGTE…KAPL), and 1281–1395 (IQLD…PLLR). Polar residues predominate over residues 568 to 589 (SPAQGPSGNRPQSTGLSCQGRS). 2 stretches are compositionally biased toward basic and acidic residues: residues 685 to 697 (IRRD…RDAA) and 727 to 742 (TRAE…REPG). The span at 786-796 (AHSSQLSSPGF) shows a compositional bias: polar residues. Residues 802–812 (PVDDKEQRKEN) are compositionally biased toward basic and acidic residues. 6 positions are modified to phosphoserine: Ser-814, Ser-845, Ser-846, Ser-864, Ser-867, and Ser-915. Composition is skewed to polar residues over residues 835-848 (PTGS…SSPE) and 859-871 (ITRT…PKAQ). Position 917 is a phosphothreonine (Thr-917). Phosphoserine is present on residues Ser-936, Ser-973, and Ser-991. The span at 988–999 (RPPSRSRSTSSS) shows a compositional bias: low complexity. Residues 1000–1011 (RSRKKAKRKRVS) show a composition bias toward basic residues. The segment covering 1012–1030 (REHGRTRSGTRSESRDRSS) has biased composition (basic and acidic residues). The span at 1043-1053 (RRQRSKAKSRR) shows a compositional bias: basic residues. Positions 1054–1063 (SSSDRSSSRE) are enriched in basic and acidic residues. Residues 1064-1090 (RAKRKKAKDKSREHRRGPWGHSRRTSR) are compositionally biased toward basic residues. Residues 1091–1101 (SRSGSPGSSSY) are compositionally biased toward low complexity. Over residues 1106–1118 (SRKKKKRRSASRP) the composition is skewed to basic residues. Residues Ser-1124 and Ser-1128 each carry the phosphoserine modification. Basic and acidic residues-rich tracts occupy residues 1141 to 1151 (RSHERPDRKES) and 1181 to 1198 (REKW…KGAV). A phosphoserine mark is found at Ser-1202 and Ser-1229. Residues 1284-1297 (DDMSSPPSPESTDS) show a composition bias toward low complexity. Positions 1345–1356 (HLLRPDAAEKAE) are enriched in basic and acidic residues. 3 positions are modified to phosphoserine: Ser-1359, Ser-1360, and Ser-1371. Thr-1404 is modified (phosphothreonine). 4 disordered regions span residues 1407–1439 (LQES…WDME), 1455–1486 (FPSH…AQPS), 1526–1556 (TPAS…EKTK), and 1630–1649 (MRRH…GAEG). Positions 1531–1540 (PASQATAASN) are enriched in polar residues. Residues 1541-1556 (SEEKTPAPRLAAEKTK) show a composition bias toward basic and acidic residues. The stretch at 1549–1579 (RLAAEKTKKEEYMKKLHMQERAVEEVKLAIK) forms a coiled coil.

As to quaternary structure, interacts with POLR2A (via the C-terminal domain).

This Homo sapiens (Human) protein is PHD and RING finger domain-containing protein 1 (PHRF1).